Reading from the N-terminus, the 467-residue chain is Coiled-coil domain-containing protein 174 (467 aa).

2 disordered regions span residues isoleucine 47 to glutamine 76 and glycine 129 to tryptophan 163. The span at arginine 64–glutamine 76 shows a compositional bias: basic and acidic residues. Residues arginine 64–glycine 99 adopt a coiled-coil conformation. Over residues isoleucine 136–glutamate 147 the composition is skewed to acidic residues. Serine 198 is modified (phosphoserine). Residues leucine 268 to glutamate 310 adopt a coiled-coil conformation. Disordered regions lie at residues arginine 301–tryptophan 365 and lysine 379–glutamine 454. 2 stretches are compositionally biased toward basic and acidic residues: residues isoleucine 349–tryptophan 365 and lysine 379–glutamate 390. The segment covering proline 406–proline 415 has biased composition (polar residues). Positions glycine 423–proline 446 are enriched in low complexity.

It is found in the nucleus. In terms of biological role, probably involved in neuronal development. This chain is Coiled-coil domain-containing protein 174 (Ccdc174), found in Mus musculus (Mouse).